The following is a 483-amino-acid chain: NADH-quinone oxidoreductase subunit N (483 aa).

Transmembrane regions (helical) follow at residues 13–33, 45–65, 80–100, 111–131, 165–185, 205–225, 244–264, 276–296, 301–321, 328–348, 373–393, 407–429, and 452–472; these read PALP…YGVF, GALA…NAYV, FMKL…LTFI, PVLI…NGLI, FVLG…IYGF, IGVI…ISAV, AFFA…VLFV, IIVF…IGQS, LMAY…AAGT, VLIY…CILA, AFMM…AGFF, LYPL…LRIV, and VLGI…PLIL.

This sequence belongs to the complex I subunit 2 family. As to quaternary structure, NDH-1 is composed of 14 different subunits. Subunits NuoA, H, J, K, L, M, N constitute the membrane sector of the complex.

It is found in the cell inner membrane. The catalysed reaction is a quinone + NADH + 5 H(+)(in) = a quinol + NAD(+) + 4 H(+)(out). NDH-1 shuttles electrons from NADH, via FMN and iron-sulfur (Fe-S) centers, to quinones in the respiratory chain. The immediate electron acceptor for the enzyme in this species is believed to be ubiquinone. Couples the redox reaction to proton translocation (for every two electrons transferred, four hydrogen ions are translocated across the cytoplasmic membrane), and thus conserves the redox energy in a proton gradient. The protein is NADH-quinone oxidoreductase subunit N of Parvibaculum lavamentivorans (strain DS-1 / DSM 13023 / NCIMB 13966).